The primary structure comprises 351 residues: Probable RNA methyltransferase BAV1540 (351 aa).

The Proton acceptor role is filled by Glu90. The 227-residue stretch at 93-319 (LLPRDGLCVS…VKVRNSAGQD (227 aa)) folds into the Radical SAM core domain. Cys100 and Cys324 are joined by a disulfide. Residues Cys107, Cys111, and Cys114 each coordinate [4Fe-4S] cluster. Residues 152–153 (GE), Ser182, 205–207 (SLH), and Asn281 contribute to the S-adenosyl-L-methionine site. Residue Cys324 is the S-methylcysteine intermediate of the active site.

The protein belongs to the radical SAM superfamily. RlmN family. [4Fe-4S] cluster is required as a cofactor.

It is found in the cytoplasm. In Bordetella avium (strain 197N), this protein is Probable RNA methyltransferase BAV1540.